Here is a 167-residue protein sequence, read N- to C-terminus: N5-carboxyaminoimidazole ribonucleotide mutase (167 aa).

Residues serine 11, aspartate 14, and arginine 41 each contribute to the substrate site.

It belongs to the AIR carboxylase family. Class I subfamily.

The enzyme catalyses 5-carboxyamino-1-(5-phospho-D-ribosyl)imidazole + H(+) = 5-amino-1-(5-phospho-D-ribosyl)imidazole-4-carboxylate. It functions in the pathway purine metabolism; IMP biosynthesis via de novo pathway; 5-amino-1-(5-phospho-D-ribosyl)imidazole-4-carboxylate from 5-amino-1-(5-phospho-D-ribosyl)imidazole (N5-CAIR route): step 2/2. Catalyzes the conversion of N5-carboxyaminoimidazole ribonucleotide (N5-CAIR) to 4-carboxy-5-aminoimidazole ribonucleotide (CAIR). This is N5-carboxyaminoimidazole ribonucleotide mutase from Aquifex aeolicus (strain VF5).